We begin with the raw amino-acid sequence, 208 residues long: Urease accessory protein UreE (208 aa).

The segment at 145–165 (EGGAYSAGGHGHTHAPAATPV) is disordered.

This sequence belongs to the UreE family.

Its subcellular location is the cytoplasm. Its function is as follows. Involved in urease metallocenter assembly. Binds nickel. Probably functions as a nickel donor during metallocenter assembly. The protein is Urease accessory protein UreE of Polaromonas naphthalenivorans (strain CJ2).